We begin with the raw amino-acid sequence, 344 residues long: L-rhamnose-proton symporter (344 aa).

10 consecutive transmembrane segments (helical) span residues 4 to 24 (AITM…CFYA), 38 to 58 (WSVG…ALLL), 68 to 88 (FNLS…IGNI), 101 to 121 (MGIG…TPII), 137 to 157 (TLLG…AGQL), 175 to 195 (LLLA…MNAA), 214 to 234 (LPSY…FCFI), 259 to 279 (ILLS…YAWG), 290 to 310 (MSWM…GLVL), and 321 to 341 (VAVL…VGLG).

The protein belongs to the L-rhamnose transporter (TC 2.A.7.6) family.

It is found in the cell inner membrane. The catalysed reaction is L-rhamnopyranose(in) + H(+)(in) = L-rhamnopyranose(out) + H(+)(out). Uptake of L-rhamnose across the cytoplasmic membrane with the concomitant transport of protons into the cell (symport system). The polypeptide is L-rhamnose-proton symporter (Salmonella paratyphi A (strain ATCC 9150 / SARB42)).